Consider the following 313-residue polypeptide: Protein FixB (313 aa).

255-283 (LYLAVGISGQIQHMVGANASQTIFAINKD) is an FAD binding site.

It belongs to the ETF alpha-subunit/FixB family. As to quaternary structure, heterodimer of FixA and FixB.

It participates in amine and polyamine metabolism; carnitine metabolism. Required for anaerobic carnitine reduction. May bring reductant to CaiA. This Escherichia coli (strain 55989 / EAEC) protein is Protein FixB.